A 238-amino-acid chain; its full sequence is Aspartate/glutamate leucyltransferase (238 aa).

This sequence belongs to the R-transferase family. Bpt subfamily.

It is found in the cytoplasm. It catalyses the reaction N-terminal L-glutamyl-[protein] + L-leucyl-tRNA(Leu) = N-terminal L-leucyl-L-glutamyl-[protein] + tRNA(Leu) + H(+). The catalysed reaction is N-terminal L-aspartyl-[protein] + L-leucyl-tRNA(Leu) = N-terminal L-leucyl-L-aspartyl-[protein] + tRNA(Leu) + H(+). Its function is as follows. Functions in the N-end rule pathway of protein degradation where it conjugates Leu from its aminoacyl-tRNA to the N-termini of proteins containing an N-terminal aspartate or glutamate. This is Aspartate/glutamate leucyltransferase from Shewanella sp. (strain ANA-3).